The primary structure comprises 232 residues: Large ribosomal subunit protein uL1 (232 aa).

This sequence belongs to the universal ribosomal protein uL1 family. Part of the 50S ribosomal subunit.

Its function is as follows. Binds directly to 23S rRNA. The L1 stalk is quite mobile in the ribosome, and is involved in E site tRNA release. In terms of biological role, protein L1 is also a translational repressor protein, it controls the translation of the L11 operon by binding to its mRNA. The polypeptide is Large ribosomal subunit protein uL1 (Dichelobacter nodosus (strain VCS1703A)).